The following is a 50-amino-acid chain: Tubulin alpha chain (50 aa).

Residue N28 participates in GTP binding. E40 is an active-site residue.

This sequence belongs to the tubulin family. Dimer of alpha and beta chains. A typical microtubule is a hollow water-filled tube with an outer diameter of 25 nm and an inner diameter of 15 nM. Alpha-beta heterodimers associate head-to-tail to form protofilaments running lengthwise along the microtubule wall with the beta-tubulin subunit facing the microtubule plus end conferring a structural polarity. Microtubules usually have 13 protofilaments but different protofilament numbers can be found in some organisms and specialized cells. Mg(2+) serves as cofactor.

It is found in the cytoplasm. The protein localises to the cytoskeleton. The catalysed reaction is GTP + H2O = GDP + phosphate + H(+). Functionally, tubulin is the major constituent of microtubules, a cylinder consisting of laterally associated linear protofilaments composed of alpha- and beta-tubulin heterodimers. Microtubules grow by the addition of GTP-tubulin dimers to the microtubule end, where a stabilizing cap forms. Below the cap, tubulin dimers are in GDP-bound state, owing to GTPase activity of alpha-tubulin. The polypeptide is Tubulin alpha chain (Populus euphratica (Euphrates poplar)).